The chain runs to 411 residues: S-inosyl-L-homocysteine hydrolase (411 aa).

2 residues coordinate substrate: Asp121 and Glu146. 147 to 149 (TTT) contributes to the NAD(+) binding site. Residues Lys176 and Asp180 each contribute to the substrate site. NAD(+)-binding positions include Asn181, 210–215 (GYGWCG), Glu233, Asn268, 289–291 (SGH), and Asn335.

Belongs to the adenosylhomocysteinase family. It depends on NAD(+) as a cofactor.

The protein resides in the cytoplasm. It carries out the reaction S-inosyl-L-homocysteine + H2O = L-homocysteine + inosine. Its pathway is amino-acid biosynthesis; S-adenosyl-L-methionine biosynthesis. In terms of biological role, catalyzes the hydrolysis of S-inosyl-L-homocysteine (SIH) to L-homocysteine (Hcy) and inosine. Likely functions in a S-adenosyl-L-methionine (SAM) recycling pathway from S-adenosyl-L-homocysteine (SAH) produced from SAM-dependent methylation reactions. Can also catalyze the reverse reaction in vitro, i.e. the synthesis of SIH from Hcy and inosine. This chain is S-inosyl-L-homocysteine hydrolase, found in Methanosarcina mazei (strain ATCC BAA-159 / DSM 3647 / Goe1 / Go1 / JCM 11833 / OCM 88) (Methanosarcina frisia).